The chain runs to 374 residues: MSDADSLSCSLTLESDEYDEEEYDTNLSKLLENKTLNWIFVGGKGGVGKTTTSCSIAVQLAKRRESVLLLSTDPAHNTSDAFNQKFTNQPTLINSFDNLYCMEIDTTYSENTAFKLNKTEFFDNIIPELLQSFPGIDEALCFAELMQSIKNMKYSVIVFDTAPTGHTLRLLAFPELLKKALGYLINLREKLKGTLNMLKSFTNNEMELEGIYEKINHLNAMSISIQSNFQNPLKTTFVCVCIPEFLSVYETERLIQELTKKNISCYNIVVNQVVFPLDSMTVDVAHCEGLLKQIKDKQVQESFSSLVQKTKELEDVYISRRKLQSKYLTQIKNLYGNDFHIVCMPQLKSEIRGLQNISNFSEMLLESKEIPIYR.

44 to 51 (KGGVGKTT) is an ATP binding site. The active site involves D73. ATP is bound by residues E244 and N271.

This sequence belongs to the arsA ATPase family. As to quaternary structure, homodimer.

The protein resides in the cytoplasm. It localises to the endoplasmic reticulum. In terms of biological role, ATPase required for the post-translational delivery of tail-anchored (TA) proteins to the endoplasmic reticulum. Recognizes and selectively binds the transmembrane domain of TA proteins in the cytosol. This complex then targets to the endoplasmic reticulum by membrane-bound receptors, where the tail-anchored protein is released for insertion. This process is regulated by ATP binding and hydrolysis. ATP binding drives the homodimer towards the closed dimer state, facilitating recognition of newly synthesized TA membrane proteins. ATP hydrolysis is required for insertion. Subsequently, the homodimer reverts towards the open dimer state, lowering its affinity for the membrane-bound receptor, and returning it to the cytosol to initiate a new round of targeting. The polypeptide is ATPase ASNA1 homolog (Plasmodium vivax (strain Salvador I)).